Consider the following 444-residue polypeptide: Maturase K (444 aa).

Belongs to the intron maturase 2 family. MatK subfamily.

It localises to the plastid. The protein resides in the chloroplast. Its function is as follows. Usually encoded in the trnK tRNA gene intron. Probably assists in splicing its own and other chloroplast group II introns. This chain is Maturase K, found in Chamaecyparis lawsoniana (Lawson false cypress).